The sequence spans 289 residues: Signal peptidase I (289 aa).

Over 1 to 43 (MKKLTSTTTTLWDNKLFINNLKNFMQTNTESNNNKTTAQEWKS) the chain is Cytoplasmic. The helical transmembrane segment at 44–64 (FILVVVIALMIRILIIESFVV) threads the bilayer. The Periplasmic portion of the chain corresponds to 65–289 (PTGSMKATIL…IFRNLYSIED (225 aa)). Catalysis depends on residues Ser-68 and Lys-131.

The protein belongs to the peptidase S26 family.

It is found in the cell inner membrane. It catalyses the reaction Cleavage of hydrophobic, N-terminal signal or leader sequences from secreted and periplasmic proteins.. The protein is Signal peptidase I (lepB) of Rickettsia bellii (strain OSU 85-389).